The following is a 253-amino-acid chain: tRNA (guanine-N(1)-)-methyltransferase (253 aa).

S-adenosyl-L-methionine contacts are provided by residues Gly110 and 130 to 135 (IGDYIL).

This sequence belongs to the RNA methyltransferase TrmD family. Homodimer.

The protein resides in the cytoplasm. The enzyme catalyses guanosine(37) in tRNA + S-adenosyl-L-methionine = N(1)-methylguanosine(37) in tRNA + S-adenosyl-L-homocysteine + H(+). In terms of biological role, specifically methylates guanosine-37 in various tRNAs. The chain is tRNA (guanine-N(1)-)-methyltransferase from Carboxydothermus hydrogenoformans (strain ATCC BAA-161 / DSM 6008 / Z-2901).